The primary structure comprises 254 residues: uncharacterized protein (254 aa).

Positions 18, 37, 63, 90, 159, 163, 192, and 194 each coordinate NADP(+). The active-site Proton donor is the Tyr159. Lys163 (lowers pKa of active site Tyr) is an active-site residue.

This sequence belongs to the short-chain dehydrogenases/reductases (SDR) family.

It localises to the cytoplasm. It is found in the nucleus. This is an uncharacterized protein from Schizosaccharomyces pombe (strain 972 / ATCC 24843) (Fission yeast).